Consider the following 573-residue polypeptide: Thiol:disulfide interchange protein DsbD (573 aa).

The first 20 residues, 1–20, serve as a signal peptide directing secretion; the sequence is MLKRFFLLLSSLLLVCNVQA. The Periplasmic portion of the chain corresponds to 21–175; it reads GLFNNKPQYL…AENLSNNYLS (155 aa). Intrachain disulfides connect cysteine 121–cysteine 126 and cysteine 191–cysteine 313. Residues 176-196 traverse the membrane as a helical segment; that stretch reads IFGFLLLGIGLAFTPCVLPML. The Cytoplasmic portion of the chain corresponds to 197-227; sequence PLLSAIVIGHKNRPNTSRALLLSFTYVQGMA. A helical membrane pass occupies residues 228-248; the sequence is LTYTLLGLTVAAIGLPFQVAL. Residues 249–251 are Periplasmic-facing; sequence QSP. The helical transmembrane segment at 252-272 threads the bilayer; that stretch reads AVLISLAVLFTLLAASMFGLF. Residues 273–292 lie on the Cytoplasmic side of the membrane; sequence EIRLPNTWQQKLNALSQQQQ. Residues 293–313 traverse the membrane as a helical segment; that stretch reads GGAVGNVFIMGIIAGLVASPC. The Periplasmic portion of the chain corresponds to 314-331; that stretch reads TSAPLSGALLYVAQSGNL. Residues 332 to 352 traverse the membrane as a helical segment; the sequence is LIGGLALYLLALGMGLPLILI. Over 353–365 the chain is Cytoplasmic; sequence TVFGNQILPKSGE. A helical membrane pass occupies residues 366–386; the sequence is WLFKVKTAFGFVMLALPIFLI. The Periplasmic segment spans residues 387 to 393; the sequence is SRILPSH. A helical membrane pass occupies residues 394–414; the sequence is YEPFLWSTLALAFLGWLISSL. Residues 415-425 are Cytoplasmic-facing; that stretch reads NYSTMLKQAVR. The helical transmembrane segment at 426–446 threads the bilayer; the sequence is ILLFIAFGLTAYPWANLVWQT. The Thioredoxin domain maps to 440–573; that stretch reads ANLVWQTTSN…NQFLAWLNRL (134 aa). Topologically, residues 447 to 573 are periplasmic; the sequence is TSNTAQPTTP…NQFLAWLNRL (127 aa). Cysteine 490 and cysteine 493 are oxidised to a cystine.

It belongs to the thioredoxin family. DsbD subfamily.

It localises to the cell inner membrane. The enzyme catalyses [protein]-dithiol + NAD(+) = [protein]-disulfide + NADH + H(+). It carries out the reaction [protein]-dithiol + NADP(+) = [protein]-disulfide + NADPH + H(+). Required to facilitate the formation of correct disulfide bonds in some periplasmic proteins and for the assembly of the periplasmic c-type cytochromes. Acts by transferring electrons from cytoplasmic thioredoxin to the periplasm. This transfer involves a cascade of disulfide bond formation and reduction steps. This is Thiol:disulfide interchange protein DsbD from Haemophilus ducreyi (strain 35000HP / ATCC 700724).